An 828-amino-acid chain; its full sequence is Periplasmic nitrate reductase (828 aa).

The tat-type signal signal peptide spans methionine 1–alanine 33. The 4Fe-4S Mo/W bis-MGD-type domain maps to isoleucine 39–aspartate 95. The [4Fe-4S] cluster site is built by cysteine 46, cysteine 49, cysteine 53, and cysteine 81. Mo-bis(molybdopterin guanine dinucleotide)-binding positions include lysine 83, glutamine 150, asparagine 175, cysteine 179, tryptophan 212 to methionine 219, serine 243 to histidine 247, glutamine 262 to aspartate 264, methionine 372, glutamine 376, asparagine 482, serine 508 to aspartate 509, lysine 531, aspartate 558, and threonine 718 to threonine 727. Residue phenylalanine 794 participates in substrate binding. The Mo-bis(molybdopterin guanine dinucleotide) site is built by asparagine 802 and lysine 819.

This sequence belongs to the prokaryotic molybdopterin-containing oxidoreductase family. NasA/NapA/NarB subfamily. In terms of assembly, component of the periplasmic nitrate reductase NapAB complex composed of NapA and NapB. The cofactor is [4Fe-4S] cluster. Mo-bis(molybdopterin guanine dinucleotide) serves as cofactor. Post-translationally, predicted to be exported by the Tat system. The position of the signal peptide cleavage has not been experimentally proven.

The protein localises to the periplasm. The enzyme catalyses 2 Fe(II)-[cytochrome] + nitrate + 2 H(+) = 2 Fe(III)-[cytochrome] + nitrite + H2O. In terms of biological role, catalytic subunit of the periplasmic nitrate reductase complex NapAB. Receives electrons from NapB and catalyzes the reduction of nitrate to nitrite. This chain is Periplasmic nitrate reductase, found in Serratia proteamaculans (strain 568).